The following is a 499-amino-acid chain: Maturase K (499 aa).

The protein belongs to the intron maturase 2 family. MatK subfamily.

It localises to the plastid. It is found in the chloroplast. In terms of biological role, usually encoded in the trnK tRNA gene intron. Probably assists in splicing its own and other chloroplast group II introns. The sequence is that of Maturase K from Batis maritima (Maritime saltwort).